Here is a 389-residue protein sequence, read N- to C-terminus: MSELNVTPSSVSPEIVIPKKEKINLLDLNRQQMREFFAGLGEKPFRADQVMKWIYHYCCDDFDEMTDINKVFRNRLKELAEIRAPEVAEEQRSSDGTIKWAIQVGGQQVETVYIPEKDRATLCVSSQVGCALECKFCSTAQQGFNRNLRVSEIIGQVWRAAKIIGATKVIGQRPITNVVMMGMGEPLLNLTNVVPAMEIMLDDFGFGLSKRRVTLSTSGVVPALDKLGDMIDVALAISLHAPNDTIRDEIVPINKKYNIETFLASVSRYIGKSNANQGRVTIEYVMLDHINDSTDNAHELAALLKETPCKINLIPWNPFPGAPYGRSSNSRIDRFSKVLMEYGFTTIVRKTRGDDIDAACGQLAGDVIDRTKRTLKKKMAGEAISVKAL.

Glu-110 (proton acceptor) is an active-site residue. A Radical SAM core domain is found at 116-355 (EKDRATLCVS…TIVRKTRGDD (240 aa)). Cys-123 and Cys-360 are disulfide-bonded. Cys-130, Cys-134, and Cys-137 together coordinate [4Fe-4S] cluster. S-adenosyl-L-methionine-binding positions include 184–185 (GE), Ser-216, 238–240 (SLH), and Asn-317. Cys-360 (S-methylcysteine intermediate) is an active-site residue.

It belongs to the radical SAM superfamily. RlmN family. Requires [4Fe-4S] cluster as cofactor.

It is found in the cytoplasm. It catalyses the reaction adenosine(2503) in 23S rRNA + 2 reduced [2Fe-2S]-[ferredoxin] + 2 S-adenosyl-L-methionine = 2-methyladenosine(2503) in 23S rRNA + 5'-deoxyadenosine + L-methionine + 2 oxidized [2Fe-2S]-[ferredoxin] + S-adenosyl-L-homocysteine. The catalysed reaction is adenosine(37) in tRNA + 2 reduced [2Fe-2S]-[ferredoxin] + 2 S-adenosyl-L-methionine = 2-methyladenosine(37) in tRNA + 5'-deoxyadenosine + L-methionine + 2 oxidized [2Fe-2S]-[ferredoxin] + S-adenosyl-L-homocysteine. In terms of biological role, specifically methylates position 2 of adenine 2503 in 23S rRNA and position 2 of adenine 37 in tRNAs. m2A2503 modification seems to play a crucial role in the proofreading step occurring at the peptidyl transferase center and thus would serve to optimize ribosomal fidelity. The polypeptide is Dual-specificity RNA methyltransferase RlmN (Erwinia tasmaniensis (strain DSM 17950 / CFBP 7177 / CIP 109463 / NCPPB 4357 / Et1/99)).